Reading from the N-terminus, the 500-residue chain is MAKAELMDYDEAIEMFEPVLGFEVHVELNTRTKMFSDAPNFFGGEPNTNITPVDLGLPGSLPVVNEQAVKHSISLGLALGCEIAPSSRFARKNYFYPDLAKNYQISQFDEPIAFRGSVEVEMPDGRIVTVPIERAHMEEDAGKLTHVGGATGRIQGADHSLVDYNRAGVPLVEIVTDIIYGAEGEAPELAKAYMSTIRDIVVALGISDAKMERGNLRCDANISLSPRGSGKLGTRTETKNVNSLRSVERAIRYEIQRQAAILAAGGTITQETRHWHEDTGRTSAGRPKSDADDYRYFPEPDLLPVQPSAELIEELRVALPESPAIRRRRLKAEWGFTDLEFQDVVNSGLLTELVDTVEAGAAPQAARKWWTGEIARIANARGVDAATLITAEQVASVIELVEAGTLTNRLARDVIEGVIDGEGTAQEVVDARGLAVVSDDGPLIAAIDEALQAQPDVLAKIRDGKVQAAGAVIGAVMKAMRGQADAARVRELVLERAQAS.

Belongs to the GatB/GatE family. GatB subfamily. As to quaternary structure, heterotrimer of A, B and C subunits.

It carries out the reaction L-glutamyl-tRNA(Gln) + L-glutamine + ATP + H2O = L-glutaminyl-tRNA(Gln) + L-glutamate + ADP + phosphate + H(+). The enzyme catalyses L-aspartyl-tRNA(Asn) + L-glutamine + ATP + H2O = L-asparaginyl-tRNA(Asn) + L-glutamate + ADP + phosphate + 2 H(+). Functionally, allows the formation of correctly charged Asn-tRNA(Asn) or Gln-tRNA(Gln) through the transamidation of misacylated Asp-tRNA(Asn) or Glu-tRNA(Gln) in organisms which lack either or both of asparaginyl-tRNA or glutaminyl-tRNA synthetases. The reaction takes place in the presence of glutamine and ATP through an activated phospho-Asp-tRNA(Asn) or phospho-Glu-tRNA(Gln). This is Aspartyl/glutamyl-tRNA(Asn/Gln) amidotransferase subunit B from Clavibacter sepedonicus (Clavibacter michiganensis subsp. sepedonicus).